The chain runs to 180 residues: Peptidyl-tRNA hydrolase (180 aa).

Residue tyrosine 15 coordinates tRNA. Histidine 20 acts as the Proton acceptor in catalysis. 3 residues coordinate tRNA: phenylalanine 67, asparagine 69, and asparagine 115.

The protein belongs to the PTH family. As to quaternary structure, monomer.

Its subcellular location is the cytoplasm. It catalyses the reaction an N-acyl-L-alpha-aminoacyl-tRNA + H2O = an N-acyl-L-amino acid + a tRNA + H(+). In terms of biological role, hydrolyzes ribosome-free peptidyl-tRNAs (with 1 or more amino acids incorporated), which drop off the ribosome during protein synthesis, or as a result of ribosome stalling. Its function is as follows. Catalyzes the release of premature peptidyl moieties from peptidyl-tRNA molecules trapped in stalled 50S ribosomal subunits, and thus maintains levels of free tRNAs and 50S ribosomes. This is Peptidyl-tRNA hydrolase from Chlamydia pneumoniae (Chlamydophila pneumoniae).